The primary structure comprises 240 residues: Thyroid transcription factor 1-associated protein 26 (240 aa).

The tract at residues 104–181 (LRKQQRKAGL…QEEYERVQAK (78 aa)) is disordered. Low complexity predominate over residues 131-149 (TEQTSSEEPPGGHQPQPEE). The span at 171-181 (AQEEYERVQAK) shows a compositional bias: basic and acidic residues.

Belongs to the TAP26 family. Interacts with NKX2-1.

The protein localises to the nucleus. Its function is as follows. Component of the transcription complexes of the pulmonary surfactant-associated protein-B (SFTPB) and -C (SFTPC). Enhances homeobox protein Nkx-2.1-activated SFTPB and SFTPC promoter activities. The protein is Thyroid transcription factor 1-associated protein 26 (Ccdc59) of Mus musculus (Mouse).